A 361-amino-acid chain; its full sequence is Alanine racemase (361 aa).

Lys34 (proton acceptor; specific for D-alanine) is an active-site residue. Lys34 carries the N6-(pyridoxal phosphate)lysine modification. Residue Arg129 participates in substrate binding. Tyr254 (proton acceptor; specific for L-alanine) is an active-site residue. A substrate-binding site is contributed by Met302.

It belongs to the alanine racemase family. It depends on pyridoxal 5'-phosphate as a cofactor.

The enzyme catalyses L-alanine = D-alanine. It carries out the reaction L-serine = D-serine. The protein operates within amino-acid biosynthesis; D-alanine biosynthesis; D-alanine from L-alanine: step 1/1. Its function is as follows. Catalyzes the interconversion of L-alanine and D-alanine. Likely plays an important role in supplying D-alanine, which is an indispensable constituent in the biosynthesis of bacterial cell-wall peptidoglycan. To a lesser extent, is also able to racemize L-serine and D-serine. Does not act on other proteinogenic amino-acids. This is Alanine racemase (alr1) from Vibrio cholerae serotype O1 (strain ATCC 39315 / El Tor Inaba N16961).